The sequence spans 265 residues: Small ribosomal subunit protein uS5 (265 aa).

Positions 1-15 are enriched in low complexity; it reads MADTQPAQEAPAADA. The tract at residues 1-44 is disordered; the sequence is MADTQPAQEAPAADAPRAERNFGRGRGGRGGRGRGRGGPGEEKE. Residues 26–35 show a composition bias toward basic residues; sequence RGGRGGRGRG. Positions 88-151 constitute an S5 DRBM domain; sequence LHDEMMKIYP…IAAKLNIVPV (64 aa). The disordered stretch occupies residues 245–265; it reads TEPSRDPTDEHGELLAEMTTA. Basic and acidic residues predominate over residues 246–258; that stretch reads EPSRDPTDEHGEL.

It belongs to the universal ribosomal protein uS5 family.

In terms of biological role, component of the ribosome, a large ribonucleoprotein complex responsible for the synthesis of proteins in the cell. The small ribosomal subunit (SSU) binds messenger RNAs (mRNAs) and translates the encoded message by selecting cognate aminoacyl-transfer RNA (tRNA) molecules. The large subunit (LSU) contains the ribosomal catalytic site termed the peptidyl transferase center (PTC), which catalyzes the formation of peptide bonds, thereby polymerizing the amino acids delivered by tRNAs into a polypeptide chain. The nascent polypeptides leave the ribosome through a tunnel in the LSU and interact with protein factors that function in enzymatic processing, targeting, and the membrane insertion of nascent chains at the exit of the ribosomal tunnel. Plays a role in the assembly and function of the 40S ribosomal subunit. Mutations in this protein affects the control of translational fidelity. Involved in nucleolar processing of pre-18S ribosomal RNA and ribosome assembly. This is Small ribosomal subunit protein uS5 from Leishmania amazonensis.